The chain runs to 404 residues: S-adenosylmethionine synthase (404 aa).

Residues 1-13 (MSQSRYFFTSESV) are compositionally biased toward polar residues. Residues 1–21 (MSQSRYFFTSESVSEGHPDKV) are disordered. His17 lines the ATP pocket. Asp19 contacts Mg(2+). Glu45 provides a ligand contact to K(+). Residues Glu58 and Gln101 each contribute to the L-methionine site. The interval 101-111 (QSPDINRGVDR) is flexible loop. Residues 172 to 174 (DAK), 245 to 246 (RF), Asp254, 260 to 261 (RK), Ala277, and Lys281 each bind ATP. Asp254 contributes to the L-methionine binding site. Residue Lys285 participates in L-methionine binding.

This sequence belongs to the AdoMet synthase family. In terms of assembly, homotetramer; dimer of dimers. The cofactor is Mg(2+). Requires K(+) as cofactor.

The protein resides in the cytoplasm. It carries out the reaction L-methionine + ATP + H2O = S-adenosyl-L-methionine + phosphate + diphosphate. It functions in the pathway amino-acid biosynthesis; S-adenosyl-L-methionine biosynthesis; S-adenosyl-L-methionine from L-methionine: step 1/1. Its function is as follows. Catalyzes the formation of S-adenosylmethionine (AdoMet) from methionine and ATP. The overall synthetic reaction is composed of two sequential steps, AdoMet formation and the subsequent tripolyphosphate hydrolysis which occurs prior to release of AdoMet from the enzyme. In Chlorobium phaeobacteroides (strain DSM 266 / SMG 266 / 2430), this protein is S-adenosylmethionine synthase.